The chain runs to 324 residues: HTH-type transcriptional regulator GlxA (324 aa).

The HTH araC/xylS-type domain maps to 223–321 (LAVLEKMETA…SQTPGSLRRR (99 aa)). DNA-binding regions (H-T-H motif) lie at residues 240–261 (TAMARLAGVSPRHLDRLFREHR) and 288–311 (IPEIAYATGFSSPAHFSNAFKRLF).

The chain is HTH-type transcriptional regulator GlxA (glxA) from Rhizobium meliloti (strain 1021) (Ensifer meliloti).